Here is a 1415-residue protein sequence, read N- to C-terminus: Zygote defective protein 9 (1415 aa).

TOG stretches follow at residues 1–250 (MSNW…AKNA) and 251–530 (PPVA…AGPA). A coiled-coil region spans residues 21–48 (DELRESKKWQERKEALEALLKVLTDNER). HEAT repeat units follow at residues 30–68 (QERK…VLAK), 95–132 (SFAG…TMQS), 135–172 (TGQE…AKQP), and 179–217 (VVPV…VKNL). Residues 243–278 (AEEQAKNAPPVAPTSSTPSASAASGDPSGGTATAVV) are disordered. The span at 255–276 (PTSSTPSASAASGDPSGGTATA) shows a compositional bias: low complexity. HEAT repeat units follow at residues 339–377 (ANYG…GLRT), 381–418 (PFAV…TTNL), 420–457 (AVGE…QTMP), and 464–502 (LIPS…SLQL). A disordered region spans residues 544 to 603 (APPAAAPPKKTAPPKKQPEDEEVVEEEDEPLKPPPGDKKKKVPVKENEENEPPVVAPKAE). The span at 562–572 (EDEEVVEEEDE) shows a compositional bias: acidic residues. Residues 602–867 (AELLLSDNED…VEERIKRTGV (266 aa)) are TOG 3. HEAT repeat units follow at residues 706–743 (IKVL…LKTG), 764–801 (VGPL…NAGI), and 804–841 (LKSL…FEGD). The disordered stretch occupies residues 867–914 (VKPGSGVVTSPPTGGPKILVPQQQGSVVRRPASRSRTREPEPEEVQSD).

This sequence belongs to the TOG/XMAP215 family. As to quaternary structure, interacts with tac-1 to form a heterodimer.

Its subcellular location is the cytoplasm. It is found in the cytoskeleton. It localises to the spindle pole. The protein localises to the microtubule organizing center. The protein resides in the centrosome. Functionally, plays a major role in organizing microtubules and spindle poles during mitosis and meiosis in one-cell stage embryos. Required for default nucleus positioning in oocytes. The chain is Zygote defective protein 9 from Caenorhabditis elegans.